The sequence spans 675 residues: MKNISFKVNDFQYTINNKLTLIQACLKNKVDISRFCFHEKLSIAGNCRMCLVEDLKQVKPLASCAINVSNSMNIYTNTLKVKKARESVLEFLLANHPLDCPICDQGGECDLQDQSVVFGSDRGRFYEFKRSVEDKDCGPLIKTIMNRCIHCTRCVRFSNEVAGVNILGVTGRGSKMEIGFYIENLMRSELSGNVIDLCPVGALTSKPFAFTSRPWELKSYNSIDVLDSLHSNIRVDIRGTKIMRILPRVNSELNEDWITDKIRFSYDSFRRQRLYDPMVKISGSFLKIGWKKAMLFIKKFFCNFLGFNHSSFIPLRGYIGDYLDLETIYTFKKFLLLNGSNFFLPSSSYNDLTALYSFNTPLTRLDEGDFCILLDVNLRVELPIVNSRIKQLVSKKMLPVFVLGFYSNFNYFVKHISNSSKTLLHVLEGSHWLSAKISKKFSSKPIFLIGDSSSLLKGSLIVPLFNFTNVICDNWNGLNIISNDSSYLSTKEFNLSSSHSQNSHLLNFPINFVLNYDKAVLVDSSAFQIYQGHHGDTNAINSNLIFPSTSFIEKNSFYSNSLAIVQKTKKILFSPGNSRDDWKILNALIDNFGFSYFKVRNSFDLVSFLSESTPFILYKRSFSFKCFGFYEQLVYHFFNYFSVNNNYYIYDSITRNSKIMSLCFNKFKMKGYNFF.

In terms of domain architecture, 2Fe-2S ferredoxin-type spans Lys2–Lys80. Cys36, Cys47, Cys50, and Cys64 together coordinate [2Fe-2S] cluster. The 40-residue stretch at Lys80–Gly119 folds into the 4Fe-4S His(Cys)3-ligated-type domain. [4Fe-4S] cluster-binding residues include His96, Cys100, Cys103, Cys109, Cys148, Cys151, Cys154, and Cys198. One can recognise a 4Fe-4S Mo/W bis-MGD-type domain in the interval Leu217 to Arg273.

It belongs to the complex I 75 kDa subunit family. In terms of assembly, complex I is composed of about 30 different subunits. It depends on [2Fe-2S] cluster as a cofactor. [4Fe-4S] cluster is required as a cofactor.

Its subcellular location is the mitochondrion inner membrane. It carries out the reaction a ubiquinone + NADH + 5 H(+)(in) = a ubiquinol + NAD(+) + 4 H(+)(out). Core subunit of the mitochondrial membrane respiratory chain NADH dehydrogenase (Complex I) that is believed to belong to the minimal assembly required for catalysis. Complex I functions in the transfer of electrons from NADH to the respiratory chain. The immediate electron acceptor for the enzyme is believed to be ubiquinone. This is the largest subunit of complex I and it is a component of the iron-sulfur (IP) fragment of the enzyme. It may form part of the active site crevice where NADH is oxidized. The sequence is that of NADH-ubiquinone oxidoreductase 75 kDa subunit (NAD11) from Acanthamoeba castellanii (Amoeba).